The primary structure comprises 205 residues: Protein phosphatase inhibitor 2 family member B (205 aa).

Residues 1–44 (MAASTASHRPIKGILKNKTSTTSSMVASAEQPRRSVDEELSKKS) are disordered. Alanine 2 carries the post-translational modification N-acetylalanine. Required for binding PPP1CC regions lie at residues 12 to 17 (KGILKN) and 43 to 55 (KSQK…ILAT). Residues 17–26 (NKTSTTSSMV) show a composition bias toward polar residues. Residues 31–44 (QPRRSVDEELSKKS) are compositionally biased toward basic and acidic residues. Serine 44 is modified (phosphoserine). Phosphothreonine is present on residues threonine 89 and threonine 92. Residues 111–142 (EPKYRIQEQESSGEEDSDLSPEEREKKRQFEM) are disordered. A phosphoserine mark is found at serine 121, serine 122, serine 127, and serine 130. Residues 121–130 (SSGEEDSDLS) are compositionally biased toward acidic residues. The segment covering 131–142 (PEEREKKRQFEM) has biased composition (basic and acidic residues). The segment at 147–150 (HYNE) is required for binding PPP1CC catalytic center, displacing metal ions and inhibition of PPP1CC catalytic activity. Positions 163 to 205 (KDLHDDDEDEEMLETADGESMNTEESNQGSTPSDQQQNKLRSS) are disordered. Residues 167-179 (DDDEDEEMLETAD) show a composition bias toward acidic residues. Over residues 182-205 (SMNTEESNQGSTPSDQQQNKLRSS) the composition is skewed to polar residues.

This sequence belongs to the protein phosphatase inhibitor 2 family. In terms of assembly, interacts with PPP1CC. Only detected in spermatozoa, both heads and tails.

Functionally, inhibitor of protein-phosphatase 1. This Homo sapiens (Human) protein is Protein phosphatase inhibitor 2 family member B.